A 211-amino-acid polypeptide reads, in one-letter code: MAKIKLLSIDGNFAKELEVTSDLFVEVPHKQAMFDSVLAENAAERQGTHSTLTKGEVRGGGKKPWRQKHTGKARTGSTRNPHWTGGGVVFGPKPNRNYNLKVNAKVRLLAFKSALTIKLNEGKMLGLVANSDLETPSTKKMVNFINNANLENQKVLLVIVDNFSNIKKSTNNLQKVTTKLWYQVSVRDLMHANVVVVAEEAFTNYARKVSK.

Positions 44–90 (ERQGTHSTLTKGEVRGGGKKPWRQKHTGKARTGSTRNPHWTGGGVVF) are disordered. Positions 60–72 (GGKKPWRQKHTGK) are enriched in basic residues.

This sequence belongs to the universal ribosomal protein uL4 family. As to quaternary structure, part of the 50S ribosomal subunit.

In terms of biological role, one of the primary rRNA binding proteins, this protein initially binds near the 5'-end of the 23S rRNA. It is important during the early stages of 50S assembly. It makes multiple contacts with different domains of the 23S rRNA in the assembled 50S subunit and ribosome. Its function is as follows. Forms part of the polypeptide exit tunnel. In Ureaplasma parvum serovar 3 (strain ATCC 27815 / 27 / NCTC 11736), this protein is Large ribosomal subunit protein uL4.